We begin with the raw amino-acid sequence, 469 residues long: Protein RUFY3 (469 aa).

A phosphothreonine mark is found at Thr-5 and Thr-12. A phosphoserine mark is found at Tyr-27, Ser-34, and Ser-49. Thr-51 carries the post-translational modification Phosphothreonine. Residue Asp-53 is modified to Phosphoserine. In terms of domain architecture, RUN spans 95 to 227 (DSDYAPLQQF…IDANFCMKGE (133 aa)). 2 coiled-coil regions span residues 271–362 (NRHL…VEKE) and 422–463 (KSEL…AANK). The span at 321-337 (SYLLESNRKGPKQDRTA) shows a compositional bias: basic and acidic residues. The segment at 321–342 (SYLLESNRKGPKQDRTAEGQAL) is disordered.

As to quaternary structure, interacts with PAK1. Interacts (via C-terminus) with Ras-related Rab-5 proteins. Interacts (via C-terminus) with Ras-related Rap-2 proteins. Interacts with PIK3CA and PIK3R1. Interacts (via N-terminus) with FSCN1; this interaction induces neuron axon development. Interacts with DBN1. Interacts (via the second coiled coil) with GTP-, but not GDP-bound ARL8A and ARL8B. Interacts with dynactin/DCTN1 and the dynein intermediate chain DYNC1I1/2. Directly interacts with DYNC1LI1. Phosphorylated by PAK1. Isoform 1 is partially phosphorylated. In terms of tissue distribution, expressed in brain (at protein level).

It is found in the cytoplasm. The protein localises to the endomembrane system. Its subcellular location is the cell projection. The protein resides in the invadopodium. It localises to the growth cone. It is found in the perikaryon. The protein localises to the filopodium. Its subcellular location is the lamellipodium. The protein resides in the lysosome. Functionally, ARL8 effector that promotes the coupling of endolysosomes to dynein-dynactin for retrograde transport along microtubules. Acts by binding both GTP-bound ARL8 and dynein-dynactin. In nonneuronal cells, promotes concentration of endolysosomes in the juxtanuclear area. In hippocampal neurons, drives retrograde transport of endolysosomes from the axon to the soma. Plays a role in the generation of neuronal polarity formation and axon growth. Implicated in the formation of a single axon by developing neurons. May inhibit the formation of additional axons by inhibition of PI3K in minor neuronal processes. Plays a role in the formation of F-actin-enriched protrusive structures at the cell periphery. Plays a role in cytoskeletal organization by regulating the subcellular localization of FSCN1 and DBN1 at axonal growth cones. This is Protein RUFY3 from Mus musculus (Mouse).